The sequence spans 262 residues: Acyl-[acyl-carrier-protein]--UDP-N-acetylglucosamine O-acyltransferase (262 aa).

The protein belongs to the transferase hexapeptide repeat family. LpxA subfamily. In terms of assembly, homotrimer.

Its subcellular location is the cytoplasm. It catalyses the reaction a (3R)-hydroxyacyl-[ACP] + UDP-N-acetyl-alpha-D-glucosamine = a UDP-3-O-[(3R)-3-hydroxyacyl]-N-acetyl-alpha-D-glucosamine + holo-[ACP]. Its pathway is glycolipid biosynthesis; lipid IV(A) biosynthesis; lipid IV(A) from (3R)-3-hydroxytetradecanoyl-[acyl-carrier-protein] and UDP-N-acetyl-alpha-D-glucosamine: step 1/6. Functionally, involved in the biosynthesis of lipid A, a phosphorylated glycolipid that anchors the lipopolysaccharide to the outer membrane of the cell. The sequence is that of Acyl-[acyl-carrier-protein]--UDP-N-acetylglucosamine O-acyltransferase from Yersinia pseudotuberculosis serotype O:1b (strain IP 31758).